A 251-amino-acid polypeptide reads, in one-letter code: MAAHLLIVDALNLIRRIHAVQGSPCVETCQHALDQLIIHSQPTHAVAVFDDDARSSGWRHQRLPDYKAGRPPMPDDLHNEMPALRAAFEQRGVRCWASDGNEADDLAATLALKVTEAGHQATIVSTDKGYCQLLSPGLRIRDYFQKRWLDAPFIEKEFGVLPRQLPDYWGLAGISSSKVPGVAGIGPKSATQLLIQFQNLEGIYAHLDKVPEKWRKKLETHKEMAFLCRDIARLQTDLHIDGNLQQLRLAR.

Asp104 contributes to the Mg(2+) binding site. One can recognise a 5'-3' exonuclease domain in the interval 160-249 (VLPRQLPDYW…IDGNLQQLRL (90 aa)). The K(+) site is built by Leu171, Ala172, Pro180, Val182, and Ile185. The segment at 184–189 (GIGPKS) is interaction with DNA.

This sequence belongs to the Xni family. Mg(2+) is required as a cofactor. The cofactor is K(+).

Its function is as follows. Has flap endonuclease activity. During DNA replication, flap endonucleases cleave the 5'-overhanging flap structure that is generated by displacement synthesis when DNA polymerase encounters the 5'-end of a downstream Okazaki fragment. The chain is Flap endonuclease Xni from Salmonella choleraesuis (strain SC-B67).